The chain runs to 411 residues: Inhibin beta B chain (411 aa).

An N-terminal signal peptide occupies residues 1–28 (MDGLPGRALGAACLLLLAAGWLGPEAWG). A disordered region spans residues 27-69 (WGSPTPPPSPAAPPPPPPPGAPGGSQDTCTSCGGGGGGFRRPE). The propeptide occupies 29–296 (SPTPPPSPAA…GDSRHRIRKR (268 aa)). Residues 30-47 (PTPPPSPAAPPPPPPPGA) show a composition bias toward pro residues. N97 carries an N-linked (GlcNAc...) asparagine glycan. 4 disulfide bridges follow: C300–C308, C307–C376, C336–C408, and C340–C410.

Belongs to the TGF-beta family. Dimeric, linked by one or more disulfide bonds. Inhibin B is a dimer of alpha and beta-B. Activin B is a homodimer of beta-B. Activin AB is a dimer of beta-A and beta-B. Interacts with FST and FSTL3. In terms of tissue distribution, alpha- and beta-B subunits are the predominant forms found in rat testis. Also expressed in ovary.

It localises to the secreted. In terms of biological role, inhibins and activins inhibit and activate, respectively, the secretion of follitropin by the pituitary gland. Inhibins/activins are involved in regulating a number of diverse functions such as hypothalamic and pituitary hormone secretion, gonadal hormone secretion, germ cell development and maturation, erythroid differentiation, insulin secretion, nerve cell survival, embryonic axial development or bone growth, depending on their subunit composition. Inhibins appear to oppose the functions of activins. Activin B is a dimer of alpha and beta-B that plays a role in several essential biological processes including embryonic development, stem cell maintenance and differentiation, haematopoiesis, cell proliferation and wound healing. Signals through type I receptor ACVR1C, abundantly expressed in pancreatic beta cells, and type II receptors like ACVR2A. Upon ligand binding, these receptors phosphorylate intracellular signaling mediators SMAD2 and SMAD3, which form a complex with SMAD4, translocate to the nucleus, and regulate gene expression. Plays a crucial role in the induction of hepcidin by inflammation through activation of ACVR1C and subsequent phosphorylation of SMAD1/5/8. Regulates adipocyte lipid metabolism by decreasing non-esterified fatty acids and glycerol release and increases intracellular triglyceride content. Stimulates wound healing by promoting cell migration and hair follicle regeneration through the JNK and ERK signaling pathways downstream of RHOA. Functionally, inhibin B is a dimer of alpha and beta-B that plays a crucial role in the regulation of the reproductive system by inhibiting the secretion of follicle-stimulating hormone (FSH) from the anterior pituitary gland. Thereby, maintains reproductive homeostasis in both males and females. Acts as a more potent suppressor of FSH release than inhibin A. Functions as competitive receptor antagonist binding activin type II receptors with high affinity in the presence of the TGF-beta type III coreceptor/TGFBR3L. This is Inhibin beta B chain (Inhbb) from Rattus norvegicus (Rat).